The sequence spans 248 residues: MAGHSQFKNIMHRKGRQDAQKSKLFSKLAREITVAAKLGTPDPAMNARLRSAIIAARQENMPKDNIERAIKKAIGSDGENYDEIRYEGYGPGGVAVIVEALTDNRNRAASDIRSYFTKSGGNLGETGSVAFMFDRTGIIEFDAKVASADDMLDAAIEAGADDVLSSDSGHEVYASQDSFREVAKALEQKFGEARKAALTWKPQNTVPVDDETGEKLLKLIDLLQEHDDVQNVYANFEVSDALMAKMGG.

The segment at 1–21 (MAGHSQFKNIMHRKGRQDAQK) is disordered.

Belongs to the TACO1 family.

It is found in the cytoplasm. The chain is Probable transcriptional regulatory protein RPC_4807 from Rhodopseudomonas palustris (strain BisB18).